Here is a 153-residue protein sequence, read N- to C-terminus: MTRVILVQDVNGLGSVGDVVEVKAGYSRNYLVPKGMAVRWTEGAQKHIGDISAARRAREAAALQEARDIANTLAKEAVTRELRLAANAGEDGRLFGSVTAANIAKVLSSASGHKIDRGKIEIDSPIKTLGEHTVKVKLHPNVKVDINVVVYAE.

This sequence belongs to the bacterial ribosomal protein bL9 family.

In terms of biological role, binds to the 23S rRNA. This is Large ribosomal subunit protein bL9 from Tropheryma whipplei (strain Twist) (Whipple's bacillus).